The sequence spans 578 residues: tRNA (guanine(26)-N(2))-dimethyltransferase (578 aa).

Positions 18-451 (NVIRERNAEI…APPAVLWDIL (434 aa)) constitute a Trm1 methyltransferase domain. R43 lines the S-adenosyl-L-methionine pocket. The tract at residues 63–92 (EKALKKQRKKVKEQEDEKTTPVPEDPPVYE) is disordered. S-adenosyl-L-methionine is bound by residues R113 and D131. Zn(2+)-binding residues include C295, C298, C335, and C338. Residues 491 to 578 (EANPKSRKSA…PKQPKLEATA (88 aa)) form a disordered region. The segment covering 564 to 578 (DVEHLPKQPKLEATA) has biased composition (basic and acidic residues).

The protein belongs to the class I-like SAM-binding methyltransferase superfamily. Trm1 family.

It catalyses the reaction guanosine(26) in tRNA + 2 S-adenosyl-L-methionine = N(2)-dimethylguanosine(26) in tRNA + 2 S-adenosyl-L-homocysteine + 2 H(+). Its function is as follows. Dimethylates a single guanine residue at position 26 of most tRNAs using S-adenosyl-L-methionine as donor of the methyl groups. This Drosophila melanogaster (Fruit fly) protein is tRNA (guanine(26)-N(2))-dimethyltransferase.